We begin with the raw amino-acid sequence, 508 residues long: Photosystem II CP47 reaction center protein (508 aa).

6 consecutive transmembrane segments (helical) span residues 21 to 36, 101 to 115, 140 to 156, 203 to 218, 237 to 252, and 457 to 472; these read SVHI…WAGS, IVFS…IWHW, GIHL…FGAF, IAAG…FHLS, VLSS…AFVV, and SFAL…HGAR.

Belongs to the PsbB/PsbC family. PsbB subfamily. PSII is composed of 1 copy each of membrane proteins PsbA, PsbB, PsbC, PsbD, PsbE, PsbF, PsbH, PsbI, PsbJ, PsbK, PsbL, PsbM, PsbT, PsbX, PsbY, PsbZ, Psb30/Ycf12, at least 3 peripheral proteins of the oxygen-evolving complex and a large number of cofactors. It forms dimeric complexes. The cofactor is Binds multiple chlorophylls. PSII binds additional chlorophylls, carotenoids and specific lipids..

Its subcellular location is the plastid. It is found in the chloroplast thylakoid membrane. One of the components of the core complex of photosystem II (PSII). It binds chlorophyll and helps catalyze the primary light-induced photochemical processes of PSII. PSII is a light-driven water:plastoquinone oxidoreductase, using light energy to abstract electrons from H(2)O, generating O(2) and a proton gradient subsequently used for ATP formation. In Ipomoea purpurea (Common morning glory), this protein is Photosystem II CP47 reaction center protein.